The chain runs to 216 residues: Phosphorylated carbohydrates phosphatase TM_1254 (216 aa).

Asp-7 functions as the Nucleophile in the catalytic mechanism.

Belongs to the HAD-like hydrolase superfamily. Co(2+) serves as cofactor. Requires Mg(2+) as cofactor. Mn(2+) is required as a cofactor. It depends on Ni(2+) as a cofactor.

Functionally, displays high phosphatase activity toward erythrose 4-phosphate, fructose 6-phosphate, 2-deoxyglucose 6-phosphate, and mannose 6-phosphate. May have a role in the intracellular metabolism of many phosphorylated carbohydrates. This Thermotoga maritima (strain ATCC 43589 / DSM 3109 / JCM 10099 / NBRC 100826 / MSB8) protein is Phosphorylated carbohydrates phosphatase TM_1254.